The chain runs to 336 residues: MRAPSMDRAAVARVGAVASASVCALVAGVVLAQYIFTLKRKTGRKTKIIEMMPEFQKSSVRIKNPTRVEEIICGLIKGGAAKLQIITDFDMTLSRFSYKGKRCPTCHNIIDNCKLVTDECRKKLLQLKEKYYAIEVDPVLTVEEKYPYMVEWYTKSHGLLVQQALPKAKLKEIVAESDVMLKEGYENFFDKLQQHSIPVFIFSAGIGDVLEEVIRQAGVYHPNVKVVSNFMDFDETGVLKGFKGELIHVFNKHDGALRNTEYFNQLKDNSNIILLGDSQGDLRMADGVANVEHILKIGYLNDRVDELLEKYMDSYDIVLVQDESLEVANSILQKIL.

Asp88 serves as the catalytic Nucleophile. Mg(2+) contacts are provided by Asp88 and Asp90. The active-site Proton donor is the Asp90. Glu135 contacts CMP. N(7)-methyl-GMP-binding residues include Glu135 and Ser156. Residues 203–204 (SA) and Lys252 each bind substrate. Asp277 is a Mg(2+) binding site. A Phosphoserine modification is found at Ser278.

This sequence belongs to the pyrimidine 5'-nucleotidase family. Monomer. Isoforms 1, 3 and 4 are expressed in reticulocytes. Isoform 4 is hardly detectable in bone marrow and fetal liver.

It localises to the cytoplasm. The protein localises to the endoplasmic reticulum. It catalyses the reaction N(7)-methyl-GMP + H2O = N(7)-methylguanosine + phosphate. The enzyme catalyses CMP + H2O = cytidine + phosphate. It carries out the reaction a ribonucleoside 5'-phosphate + H2O = a ribonucleoside + phosphate. Functionally, nucleotidase which shows specific activity towards cytidine monophosphate (CMP) and 7-methylguanosine monophosphate (m(7)GMP). CMP seems to be the preferred substrate. In Homo sapiens (Human), this protein is Cytosolic 5'-nucleotidase 3A (NT5C3A).